A 398-amino-acid polypeptide reads, in one-letter code: AT-rich interactive domain-containing protein 6 (398 aa).

Positions 25-87 (EPLEPENDHN…PKTEGENAKK (63 aa)) are disordered. In terms of domain architecture, ARID spans 106–197 (PVEQVAFLRE…ALLEYEKCLR (92 aa)). The interval 213–236 (SSVEKEPSSHQGSGSGRARRDSAA) is disordered. The region spanning 305-398 (VGPVADWVKI…RLFIRVPFEQ (94 aa)) is the sHSP domain.

The protein belongs to the small heat shock protein (HSP20) family.

Its subcellular location is the nucleus. The chain is AT-rich interactive domain-containing protein 6 (ARID6) from Arabidopsis thaliana (Mouse-ear cress).